The sequence spans 152 residues: Deoxyuridine 5'-triphosphate nucleotidohydrolase (152 aa).

Residues 71–73 (RSG), asparagine 84, 88–90 (LID), and methionine 98 each bind substrate.

It belongs to the dUTPase family. Requires Mg(2+) as cofactor.

The catalysed reaction is dUTP + H2O = dUMP + diphosphate + H(+). It participates in pyrimidine metabolism; dUMP biosynthesis; dUMP from dCTP (dUTP route): step 2/2. Functionally, this enzyme is involved in nucleotide metabolism: it produces dUMP, the immediate precursor of thymidine nucleotides and it decreases the intracellular concentration of dUTP so that uracil cannot be incorporated into DNA. The sequence is that of Deoxyuridine 5'-triphosphate nucleotidohydrolase from Klebsiella pneumoniae subsp. pneumoniae (strain ATCC 700721 / MGH 78578).